Consider the following 578-residue polypeptide: Sulfite reductase [NADPH] hemoprotein beta-component (578 aa).

The segment at 1–21 (MTNTLAGPDRSRDISQPLEKL) is disordered. Positions 443, 449, 488, and 492 each coordinate [4Fe-4S] cluster. Cysteine 492 is a siroheme binding site.

This sequence belongs to the nitrite and sulfite reductase 4Fe-4S domain family. In terms of assembly, alpha(8)-beta(8). The alpha component is a flavoprotein, the beta component is a hemoprotein. It depends on siroheme as a cofactor. [4Fe-4S] cluster serves as cofactor.

The catalysed reaction is hydrogen sulfide + 3 NADP(+) + 3 H2O = sulfite + 3 NADPH + 4 H(+). It participates in sulfur metabolism; hydrogen sulfide biosynthesis; hydrogen sulfide from sulfite (NADPH route): step 1/1. Component of the sulfite reductase complex that catalyzes the 6-electron reduction of sulfite to sulfide. This is one of several activities required for the biosynthesis of L-cysteine from sulfate. The sequence is that of Sulfite reductase [NADPH] hemoprotein beta-component from Methylocella silvestris (strain DSM 15510 / CIP 108128 / LMG 27833 / NCIMB 13906 / BL2).